The following is a 204-amino-acid chain: Nascent polypeptide-associated complex subunit alpha-like protein 3 (204 aa).

Positions 1-23 (MTAEQKVELAAKLEEQKIDLDKP) are enriched in basic and acidic residues. Disordered regions lie at residues 1–68 (MTAE…AMLK) and 141–165 (GETS…EEGV). The span at 24-43 (EVEDDDDNDEDDSEDDDEAE) shows a compositional bias: acidic residues. Ser-36 carries the post-translational modification Phosphoserine. The span at 44–59 (GHDGEAGGRSKQSRSE) shows a compositional bias: basic and acidic residues. Positions 56–121 (SRSEKKSRKA…AKIEDLSSQL (66 aa)) constitute an NAC-A/B domain. Low complexity predominate over residues 141-152 (GETSSAATAAAV). The span at 153-164 (QDDDDEEVDEEG) shows a compositional bias: acidic residues. In terms of domain architecture, UBA spans 159-204 (EVDEEGVEPKDIELVMTQAGVSKPRAVKALKLANGDIVSAIMELTT).

It belongs to the NAC-alpha family.

Its function is as follows. May promote appropriate targeting of ribosome-nascent polypeptide complexes. The sequence is that of Nascent polypeptide-associated complex subunit alpha-like protein 3 from Arabidopsis thaliana (Mouse-ear cress).